Consider the following 90-residue polypeptide: Cell division protein CrgA (90 aa).

Residues 1–25 (MPKARVTKNETAPVSSNPSANRTPV) are disordered. Polar residues predominate over residues 9-22 (NETAPVSSNPSANR). 2 helical membrane-spanning segments follow: residues 38 to 58 (VIMFAFMIVGLAWLIVNYLVG) and 67 to 87 (LGAWNYGIGFGLMIIGLLMTM).

It belongs to the CrgA family.

The protein resides in the cell membrane. In terms of biological role, involved in cell division. The chain is Cell division protein CrgA from Corynebacterium glutamicum (strain R).